The chain runs to 74 residues: Ferredoxin MycCII (74 aa).

The 29-residue stretch at 1-29 (MRIVLDAERCVGAGQCEATAPELFTQGDD) folds into the 4Fe-4S ferredoxin-type domain. 3 residues coordinate [3Fe-4S] cluster: Cys10, Cys16, and Cys54.

It depends on [3Fe-4S] cluster as a cofactor.

It participates in antibiotic biosynthesis; mycinamicin biosynthesis. Its function is as follows. Specific electron transport protein capable of effectively supporting cytochrome P450 MycCI activity in the biosynthesis of mycinamicin, a 16-membered macrolide antibiotic. In Micromonospora griseorubida, this protein is Ferredoxin MycCII.